We begin with the raw amino-acid sequence, 560 residues long: Putative transport protein VIBHAR_02636 (560 aa).

The next 5 helical transmembrane spans lie at Leu8–Gly28, Leu37–Phe57, Phe66–Phe86, His91–Ser111, and Val164–Leu184. RCK C-terminal domains are found at residues Leu205–Gly292 and Lys293–Phe376. The next 6 helical transmembrane spans lie at Leu386–Phe406, Val409–Leu429, Leu450–His470, Ile478–Ala498, Ser505–Val525, and Ala539–Leu559.

Belongs to the AAE transporter (TC 2.A.81) family. YbjL subfamily.

The protein localises to the cell membrane. This Vibrio campbellii (strain ATCC BAA-1116) protein is Putative transport protein VIBHAR_02636.